The sequence spans 649 residues: Acetyl-coenzyme A synthetase (649 aa).

CoA contacts are provided by residues 191–194 (RGGR), Thr-309, and Asn-333. Residues 385-387 (GEP), 409-414 (DTWWQT), Asp-498, and Arg-513 each bind ATP. A CoA-binding site is contributed by Ser-521. Arg-524 lines the ATP pocket. Residues Val-535, His-537, and Val-540 each contribute to the Mg(2+) site. Arg-582 lines the CoA pocket. Position 607 is an N6-acetyllysine (Lys-607).

This sequence belongs to the ATP-dependent AMP-binding enzyme family. It depends on Mg(2+) as a cofactor. In terms of processing, acetylated. Deacetylation by the SIR2-homolog deacetylase activates the enzyme.

The enzyme catalyses acetate + ATP + CoA = acetyl-CoA + AMP + diphosphate. Functionally, catalyzes the conversion of acetate into acetyl-CoA (AcCoA), an essential intermediate at the junction of anabolic and catabolic pathways. AcsA undergoes a two-step reaction. In the first half reaction, AcsA combines acetate with ATP to form acetyl-adenylate (AcAMP) intermediate. In the second half reaction, it can then transfer the acetyl group from AcAMP to the sulfhydryl group of CoA, forming the product AcCoA. This Novosphingobium aromaticivorans (strain ATCC 700278 / DSM 12444 / CCUG 56034 / CIP 105152 / NBRC 16084 / F199) protein is Acetyl-coenzyme A synthetase.